The chain runs to 200 residues: Probable GTP-binding protein EngB (200 aa).

One can recognise an EngB-type G domain in the interval 30 to 199; that stretch reads KKAEVAIAGR…EDYIYENWIK (170 aa). Residues 38–45, 64–68, 82–85, 149–152, and 178–180 contribute to the GTP site; these read GRSNAGKS, GKTRL, DMPG, TKAD, and VSA. Mg(2+) is bound by residues serine 45 and threonine 66.

It belongs to the TRAFAC class TrmE-Era-EngA-EngB-Septin-like GTPase superfamily. EngB GTPase family. Mg(2+) serves as cofactor.

Its function is as follows. Necessary for normal cell division and for the maintenance of normal septation. This is Probable GTP-binding protein EngB from Bdellovibrio bacteriovorus (strain ATCC 15356 / DSM 50701 / NCIMB 9529 / HD100).